The chain runs to 557 residues: Low affinity inorganic phosphate transporter 8 (557 aa).

The Cytoplasmic portion of the chain corresponds to 1 to 20; the sequence is MATSHGVLRSLDNAKTQSYH. The helical transmembrane segment at 21 to 41 threads the bilayer; sequence YLAIVIAGMGFFTDAYDLFCI. Over 42 to 70 the chain is Extracellular; the sequence is TAVTKLIGRLYYSDPTNHSPGILPTNVNN. The chain crosses the membrane as a helical span at residues 71–91; that stretch reads AITGVALCGTLAGQLFFGWLG. The Cytoplasmic segment spans residues 92 to 98; sequence DKLGRKK. The chain crosses the membrane as a helical span at residues 99-119; sequence VYGITLTTMVGFALLSGLSFG. The Extracellular portion of the chain corresponds to 120-130; the sequence is STPKTVVTSLC. The helical transmembrane segment at 131 to 151 threads the bilayer; it reads FFRFWLGFGIGGDYPLSAVIM. Residues 152–162 are Cytoplasmic-facing; it reads SEYANQKTRGS. The helical transmembrane segment at 163–183 threads the bilayer; that stretch reads FIAAVFAMQGVGILVAGGVAM. Topologically, residues 184 to 210 are extracellular; it reads FVSKLFLLYFPAPDFETDAVLSTQPEG. The helical transmembrane segment at 211-231 threads the bilayer; sequence DFVWRIVLMFGAVPAALTYYW. The Cytoplasmic portion of the chain corresponds to 232–294; it reads RMKMPETARY…LFSSEFLNRH (63 aa). A helical membrane pass occupies residues 295–315; that stretch reads GLHLLGTTSTWFLLDIAFYSL. At 316–346 the chain is on the extracellular side; it reads QLTQKDIYPTSGLVYKASKMNAIEEVFQLSR. The chain crosses the membrane as a helical span at residues 347-367; that stretch reads AMFAVALIATVPGYWCTVFLI. Residues 368–369 are Cytoplasmic-facing; the sequence is EK. The chain crosses the membrane as a helical span at residues 370 to 390; it reads IGRFRIQLIGFLVMSVCMWFL. Over 391–414 the chain is Extracellular; that stretch reads GHNYRSFRGEESACKNGSKYSFCN. N-linked (GlcNAc...) asparagine glycosylation is present at Asn-406. A helical transmembrane segment spans residues 415-435; sequence GNPVMFAILFGLTLFFANFGP. At 436 to 457 the chain is on the cytoplasmic side; it reads NSTTFIVPAELFPARLRSTCHG. The chain crosses the membrane as a helical span at residues 458–478; sequence ISAAAGKSGAIVGAFGVQSYI. The Extracellular segment spans residues 479–490; it reads GNSHDKSKGTKQ. Residues 491–511 form a helical membrane-spanning segment; the sequence is AIMALAVVNLLGFFFTFLVPE. Over 512–557 the chain is Cytoplasmic; it reads TQGRSLEEISGEEKDFQGNNADEEISGERNGTRNASVDKSPETSMV. Residues 519–557 are disordered; the sequence is EISGEEKDFQGNNADEEISGERNGTRNASVDKSPETSMV. Over residues 543-557 the composition is skewed to polar residues; sequence TRNASVDKSPETSMV.

This sequence belongs to the major facilitator superfamily. Phosphate:H(+) symporter (TC 2.A.1.9) family.

It localises to the cell membrane. The catalysed reaction is phosphate(in) + H(+)(in) = phosphate(out) + H(+)(out). In terms of biological role, low-affinity transporter for external inorganic phosphate (Pi) that may be involved in the acquisition of phosphate released by arbuscular mycorrhizal (AM) fungi (e.g. Glomus versiforme and G.intraradices) during AM symbiosis; not required for mycorrhizal arbuscule development. This chain is Low affinity inorganic phosphate transporter 8, found in Medicago truncatula (Barrel medic).